The primary structure comprises 194 residues: ATP-dependent Clp protease proteolytic subunit 1 (194 aa).

Catalysis depends on serine 98, which acts as the Nucleophile. Histidine 123 is a catalytic residue.

It belongs to the peptidase S14 family. As to quaternary structure, fourteen ClpP subunits assemble into 2 heptameric rings which stack back to back to give a disk-like structure with a central cavity, resembling the structure of eukaryotic proteasomes.

It localises to the cytoplasm. The catalysed reaction is Hydrolysis of proteins to small peptides in the presence of ATP and magnesium. alpha-casein is the usual test substrate. In the absence of ATP, only oligopeptides shorter than five residues are hydrolyzed (such as succinyl-Leu-Tyr-|-NHMec, and Leu-Tyr-Leu-|-Tyr-Trp, in which cleavage of the -Tyr-|-Leu- and -Tyr-|-Trp bonds also occurs).. Cleaves peptides in various proteins in a process that requires ATP hydrolysis. Has a chymotrypsin-like activity. Plays a major role in the degradation of misfolded proteins. ClpXP1 is involved in the complete degradation of the Site-2 clipped anti-sigma-W factor RsiW. This results in the release of SigW and the transcription activation of the genes under the control of the sigma-W factor. The chain is ATP-dependent Clp protease proteolytic subunit 1 from Halalkalibacterium halodurans (strain ATCC BAA-125 / DSM 18197 / FERM 7344 / JCM 9153 / C-125) (Bacillus halodurans).